The chain runs to 867 residues: DNA mismatch repair protein MutS (867 aa).

An ATP-binding site is contributed by 606 to 613 (GPNMSGKS).

Belongs to the DNA mismatch repair MutS family.

Its function is as follows. This protein is involved in the repair of mismatches in DNA. It is possible that it carries out the mismatch recognition step. This protein has a weak ATPase activity. The polypeptide is DNA mismatch repair protein MutS (Oceanobacillus iheyensis (strain DSM 14371 / CIP 107618 / JCM 11309 / KCTC 3954 / HTE831)).